We begin with the raw amino-acid sequence, 251 residues long: Pyrroloquinoline-quinone synthase (251 aa).

Belongs to the PqqC family.

The catalysed reaction is 6-(2-amino-2-carboxyethyl)-7,8-dioxo-1,2,3,4,7,8-hexahydroquinoline-2,4-dicarboxylate + 3 O2 = pyrroloquinoline quinone + 2 H2O2 + 2 H2O + H(+). It participates in cofactor biosynthesis; pyrroloquinoline quinone biosynthesis. Ring cyclization and eight-electron oxidation of 3a-(2-amino-2-carboxyethyl)-4,5-dioxo-4,5,6,7,8,9-hexahydroquinoline-7,9-dicarboxylic-acid to PQQ. In Pseudomonas syringae pv. syringae (strain B728a), this protein is Pyrroloquinoline-quinone synthase.